The chain runs to 552 residues: Membrane protein insertase YidC (552 aa).

5 helical membrane-spanning segments follow: residues 7-24 (VLWVIFFMSAVMLYDNWQ), 364-384 (WGWAIVLLTVLIKAVFFPLSA), 434-454 (LPVVIQIPVFISLYWVLLASV), 473-493 (PFFILPVLMAVSMFVQTSLNP), and 508-528 (PIAFSVMFFFFPAGLVLYYVV).

The protein belongs to the OXA1/ALB3/YidC family. Type 1 subfamily. In terms of assembly, interacts with the Sec translocase complex via SecD. Specifically interacts with transmembrane segments of nascent integral membrane proteins during membrane integration.

Its subcellular location is the cell inner membrane. In terms of biological role, required for the insertion and/or proper folding and/or complex formation of integral membrane proteins into the membrane. Involved in integration of membrane proteins that insert both dependently and independently of the Sec translocase complex, as well as at least some lipoproteins. Aids folding of multispanning membrane proteins. The protein is Membrane protein insertase YidC of Burkholderia cenocepacia (strain ATCC BAA-245 / DSM 16553 / LMG 16656 / NCTC 13227 / J2315 / CF5610) (Burkholderia cepacia (strain J2315)).